A 240-amino-acid chain; its full sequence is MNTDFVYTFPPLIPGILKRRYKRFLADIELESGEMITAHCANTGPMIGVCDAESQVYVSKSNNPKRKLAYSWELIEVDNTWVGINTALPNRVIKQILEQEKLPHLKGKYNKVRSEVPYGKDKKSRIDFVLTNESQQNPIYLEVKNTTLAKDKIALFPDTVTTRGQKHLQELMDLLPDAQPIMLYFINRGDCQQFSPGDDYDPGYGKLFREAVKKGVEILPCRFEITPQGIRYLGLADLKF.

Belongs to the SfsA family.

In Crocosphaera subtropica (strain ATCC 51142 / BH68) (Cyanothece sp. (strain ATCC 51142)), this protein is Sugar fermentation stimulation protein homolog.